The following is a 287-amino-acid chain: Chlorophyll a-b binding protein CP29.2, chloroplastic (287 aa).

The transit peptide at Met1 to Ala31 directs the protein to the chloroplast. Arg32 carries the post-translational modification N2-acetylarginine. Position 37 is a phosphothreonine (Thr37). Trp55 is a chlorophyll b binding site. Phe75 is a binding site for chlorophyll a. Phosphothreonine is present on residues Thr109 and Thr111. The chlorophyll a site is built by Glu137 and His140. Residues Trp143–Gln163 form a helical membrane-spanning segment. Leu177 is a binding site for chlorophyll a. Residues Leu181–Phe201 traverse the membrane as a helical segment. Glu200 and Arg203 together coordinate chlorophyll b. The chlorophyll a site is built by Glu239, His242, Arg244, Gln256, and His271. A helical transmembrane segment spans residues Leu245–Leu265.

This sequence belongs to the light-harvesting chlorophyll a/b-binding (LHC) protein family. As to quaternary structure, the LHC complex consists of chlorophyll a-b binding proteins. Requires Binds at least 14 chlorophylls (8 Chl-a and 6 Chl-b) and carotenoids such as lutein and neoxanthin. as cofactor. Post-translationally, photoregulated by reversible phosphorylation of its threonine residues.

The protein resides in the plastid. Its subcellular location is the chloroplast thylakoid membrane. Its function is as follows. The light-harvesting complex (LHC) functions as a light receptor, it captures and delivers excitation energy to photosystems with which it is closely associated. This Arabidopsis thaliana (Mouse-ear cress) protein is Chlorophyll a-b binding protein CP29.2, chloroplastic (LHCB4.2).